Here is a 367-residue protein sequence, read N- to C-terminus: Carbohydrate sulfotransferase 14 (367 aa).

The Cytoplasmic segment spans residues 1–34 (MPPRKKEYGIKRASGSLVHFRAPVSATTIRRHSA). Residues 35–55 (VVPSVLTFAVIVASGGLLLMI) form a helical; Signal-anchor for type II membrane protein membrane-spanning segment. Residues 56 to 367 (EKGMLNSVQT…PNTTTEYCRH (312 aa)) lie on the Lumenal side of the membrane. Asn99 carries N-linked (GlcNAc...) asparagine glycosylation. 3'-phosphoadenylyl sulfate contacts are provided by residues 144–150 (PKVACSN) and 202–210 (REPMARLLS). Asn359 carries N-linked (GlcNAc...) asparagine glycosylation.

The protein belongs to the sulfotransferase 2 family.

The protein localises to the golgi apparatus membrane. In terms of biological role, catalyzes the transfer of sulfate to position 4 of the N-acetylgalactosamine (GalNAc) residue of dermatan sulfate. This is Carbohydrate sulfotransferase 14 (chst14) from Danio rerio (Zebrafish).